Reading from the N-terminus, the 177-residue chain is tRNA (cytidine(56)-2'-O)-methyltransferase (177 aa).

S-adenosyl-L-methionine contacts are provided by residues Leu83 and 108 to 112; that span reads GAEKV.

The protein belongs to the aTrm56 family. As to quaternary structure, homodimer.

The protein localises to the cytoplasm. The catalysed reaction is cytidine(56) in tRNA + S-adenosyl-L-methionine = 2'-O-methylcytidine(56) in tRNA + S-adenosyl-L-homocysteine + H(+). Its function is as follows. Specifically catalyzes the AdoMet-dependent 2'-O-ribose methylation of cytidine at position 56 in tRNAs. The sequence is that of tRNA (cytidine(56)-2'-O)-methyltransferase from Nitrosopumilus maritimus (strain SCM1).